A 347-amino-acid polypeptide reads, in one-letter code: 3-isopropylmalate dehydrogenase (347 aa).

Substrate-binding residues include arginine 94, arginine 104, arginine 128, and aspartate 219. Positions 219, 243, and 247 each coordinate Mg(2+). Residue 279 to 291 coordinates NAD(+); the sequence is GSAPDIAGQGKAD.

This sequence belongs to the isocitrate and isopropylmalate dehydrogenases family. LeuB type 2 subfamily. In terms of assembly, homodimer. Requires Mg(2+) as cofactor. The cofactor is Mn(2+).

The protein localises to the cytoplasm. It catalyses the reaction (2R,3S)-3-isopropylmalate + NAD(+) = 4-methyl-2-oxopentanoate + CO2 + NADH. Its pathway is amino-acid biosynthesis; L-leucine biosynthesis; L-leucine from 3-methyl-2-oxobutanoate: step 3/4. In terms of biological role, catalyzes the oxidation of 3-carboxy-2-hydroxy-4-methylpentanoate (3-isopropylmalate) to 3-carboxy-4-methyl-2-oxopentanoate. The product decarboxylates to 4-methyl-2 oxopentanoate. The sequence is that of 3-isopropylmalate dehydrogenase from Streptomyces coelicolor (strain ATCC BAA-471 / A3(2) / M145).